The sequence spans 201 residues: 3-isopropylmalate dehydratase small subunit (201 aa).

It belongs to the LeuD family. LeuD type 1 subfamily. Heterodimer of LeuC and LeuD.

The enzyme catalyses (2R,3S)-3-isopropylmalate = (2S)-2-isopropylmalate. It functions in the pathway amino-acid biosynthesis; L-leucine biosynthesis; L-leucine from 3-methyl-2-oxobutanoate: step 2/4. In terms of biological role, catalyzes the isomerization between 2-isopropylmalate and 3-isopropylmalate, via the formation of 2-isopropylmaleate. The chain is 3-isopropylmalate dehydratase small subunit from Erwinia tasmaniensis (strain DSM 17950 / CFBP 7177 / CIP 109463 / NCPPB 4357 / Et1/99).